A 370-amino-acid chain; its full sequence is Cyclic AMP-responsive element-binding protein 3-like protein 4 (370 aa).

The interval 1–55 (MELGCPELLEPPEDIFSTGSFLELGFNGPASKVPVTRGLQKSEPDDFLNLFIDPN) is required for transcriptional activation. Residues 1–271 (MELGCPELLE…QTSSRAAQTS (271 aa)) lie on the Cytoplasmic side of the membrane. A disordered region spans residues 61-85 (ETSPGRDSGVSEDPGSPAQQASSSP). The segment covering 76–85 (SPAQQASSSP) has biased composition (low complexity). The bZIP domain maps to 193–256 (ILKKIRRKIR…IFLMEQVRQL (64 aa)). Residues 195-234 (KKIRRKIRNKQSAQDSRRRKKEYLDGLESRVAACSEQNQK) are basic motif. The interval 235–256 (LQRKVQELERQNIFLMEQVRQL) is leucine-zipper. Residues 272-292 (TCVLILLFSLALIILPSFSPF) traverse the membrane as a helical; Signal-anchor for type II membrane protein segment. Residues 293–370 (QGQSEARPED…IRGMVHTDEM (78 aa)) lie on the Lumenal side of the membrane. 2 N-linked (GlcNAc...) asparagine glycosylation sites follow: N318 and N342.

It belongs to the bZIP family. ATF subfamily. Binds DNA as a dimer. Forms a heterodimer with CREM isoform Tau. In terms of processing, controlled by regulated intramembrane proteolysis (RIP). Following ER stress a fragment containing the cytoplasmic transcription factor domain is released by proteolysis. The cleavage seems to be performed sequentially by site-1 and site-2 proteases (PS1 and PS2). PS1 cleavage may be suppressed by a determinant in the C-terminal region. In terms of tissue distribution, predominantly expressed at high levels in testis with isoform 2 being the predominant isoform. Specifically expressed in postmeiotic spermatids and accumulates in the mid/late stage (at protein level). Ubiquitously expressed at low levels.

It localises to the endoplasmic reticulum membrane. It is found in the cytoplasmic vesicle. Its subcellular location is the secretory vesicle. The protein localises to the acrosome inner membrane. The protein resides in the nucleus. Functionally, transcriptional activator that may play a role in the unfolded protein response of the testis. Proposed to be involved in spermiogenesis. May be involved in regulating the maturation of sperm head nuclei. Alternatively proposed to be a paternally delivered transcription factor that may function in early zygotic gene activation. Increases the binding of CREM isoform Tau with CRE. The CREM isoform Tau-CREB3L4 heterodimer functions through CRE but not through UPRE and may recruit HIRA to CRE to regulate histone exchange. In Mus musculus (Mouse), this protein is Cyclic AMP-responsive element-binding protein 3-like protein 4 (Creb3l4).